Here is a 238-residue protein sequence, read N- to C-terminus: tRNA (guanine-N(7)-)-methyltransferase (238 aa).

S-adenosyl-L-methionine is bound by residues Glu68, Glu93, Asp120, and Asp143. Asp143 is an active-site residue. Substrate contacts are provided by residues Lys147, Asp179, and 216 to 219 (TKFE).

The protein belongs to the class I-like SAM-binding methyltransferase superfamily. TrmB family.

The enzyme catalyses guanosine(46) in tRNA + S-adenosyl-L-methionine = N(7)-methylguanosine(46) in tRNA + S-adenosyl-L-homocysteine. It participates in tRNA modification; N(7)-methylguanine-tRNA biosynthesis. Its function is as follows. Catalyzes the formation of N(7)-methylguanine at position 46 (m7G46) in tRNA. The sequence is that of tRNA (guanine-N(7)-)-methyltransferase from Aliivibrio fischeri (strain MJ11) (Vibrio fischeri).